Consider the following 245-residue polypeptide: Uridylate kinase (245 aa).

14–17 (KLSG) serves as a coordination point for ATP. Residue glycine 56 coordinates UMP. Positions 57 and 61 each coordinate ATP. UMP contacts are provided by residues aspartate 76 and 137–144 (TGLPFFTT). The ATP site is built by threonine 164, tyrosine 170, and aspartate 173.

The protein belongs to the UMP kinase family. Homohexamer.

It is found in the cytoplasm. It carries out the reaction UMP + ATP = UDP + ADP. It functions in the pathway pyrimidine metabolism; CTP biosynthesis via de novo pathway; UDP from UMP (UMPK route): step 1/1. Its activity is regulated as follows. Inhibited by UTP. Functionally, catalyzes the reversible phosphorylation of UMP to UDP. The sequence is that of Uridylate kinase from Syntrophobacter fumaroxidans (strain DSM 10017 / MPOB).